We begin with the raw amino-acid sequence, 403 residues long: MLRWTTAGESHGQALIAMLEHMPAGVPISREEISFQLGRRRLGFGRGARMKFEADEVSILGGVRHGYTIGSPIAIMVGNTEWPKWTTIMSADAIDESDPDVAAAMSSGRGARLTRPRPGHADFAGMVKYNHDEARPILERSSARETAARVAAATVARSFLRETLGVEVFSHVISIGRSEIDQTVCPTFEDLGRIDDSPVRSASAQAEASMIDQINAAKKQGDTLGGIVEVIVNGLPIGLGSHISGEDRLDAQLAAALMGIQAIKGVEIGDGFEEARRLGSEAHDEIVLRDGVVARQSNRAGGIEGGMTNGESLRVRAAMKPISTVPRALQSIDMDSGKRATGIHQRSDVCAVPAAGVVAEAMVALVLARAVLEKFGGDSLAETKRNIAAYNEYVKTRIAFDGE.

NADP(+) is bound by residues arginine 40 and arginine 46. Residues 140-142, 261-262, glycine 305, 320-324, and arginine 346 each bind FMN; these read RSS, QA, and KPIST.

Belongs to the chorismate synthase family. Homotetramer. FMNH2 serves as cofactor.

The catalysed reaction is 5-O-(1-carboxyvinyl)-3-phosphoshikimate = chorismate + phosphate. Its pathway is metabolic intermediate biosynthesis; chorismate biosynthesis; chorismate from D-erythrose 4-phosphate and phosphoenolpyruvate: step 7/7. Its function is as follows. Catalyzes the anti-1,4-elimination of the C-3 phosphate and the C-6 proR hydrogen from 5-enolpyruvylshikimate-3-phosphate (EPSP) to yield chorismate, which is the branch point compound that serves as the starting substrate for the three terminal pathways of aromatic amino acid biosynthesis. This reaction introduces a second double bond into the aromatic ring system. This Corynebacterium diphtheriae (strain ATCC 700971 / NCTC 13129 / Biotype gravis) protein is Chorismate synthase.